The following is a 252-amino-acid chain: Probable transcriptional regulatory protein DSY2470 (252 aa).

The protein belongs to the TACO1 family.

It is found in the cytoplasm. The protein is Probable transcriptional regulatory protein DSY2470 of Desulfitobacterium hafniense (strain Y51).